The primary structure comprises 416 residues: Serine hydroxymethyltransferase (416 aa).

(6S)-5,6,7,8-tetrahydrofolate contacts are provided by residues Leu-118 and 122 to 124 (GHL). At Lys-226 the chain carries N6-(pyridoxal phosphate)lysine. (6S)-5,6,7,8-tetrahydrofolate-binding positions include Glu-242 and 350-352 (SPF).

It belongs to the SHMT family. Homodimer. The cofactor is pyridoxal 5'-phosphate.

The protein resides in the cytoplasm. It carries out the reaction (6R)-5,10-methylene-5,6,7,8-tetrahydrofolate + glycine + H2O = (6S)-5,6,7,8-tetrahydrofolate + L-serine. It functions in the pathway one-carbon metabolism; tetrahydrofolate interconversion. It participates in amino-acid biosynthesis; glycine biosynthesis; glycine from L-serine: step 1/1. Its function is as follows. Catalyzes the reversible interconversion of serine and glycine with tetrahydrofolate (THF) serving as the one-carbon carrier. This reaction serves as the major source of one-carbon groups required for the biosynthesis of purines, thymidylate, methionine, and other important biomolecules. Also exhibits THF-independent aldolase activity toward beta-hydroxyamino acids, producing glycine and aldehydes, via a retro-aldol mechanism. This is Serine hydroxymethyltransferase from Helicobacter pylori (strain Shi470).